Reading from the N-terminus, the 317-residue chain is Aspartate carbamoyltransferase catalytic subunit (317 aa).

Carbamoyl phosphate is bound by residues Arg-64 and Thr-65. An L-aspartate-binding site is contributed by Lys-92. Residues Arg-114, His-142, and Gln-145 each coordinate carbamoyl phosphate. Residues Arg-176 and Arg-230 each contribute to the L-aspartate site. Residues Gly-271 and Pro-272 each contribute to the carbamoyl phosphate site.

It belongs to the aspartate/ornithine carbamoyltransferase superfamily. ATCase family. Heterododecamer (2C3:3R2) of six catalytic PyrB chains organized as two trimers (C3), and six regulatory PyrI chains organized as three dimers (R2).

The enzyme catalyses carbamoyl phosphate + L-aspartate = N-carbamoyl-L-aspartate + phosphate + H(+). The protein operates within pyrimidine metabolism; UMP biosynthesis via de novo pathway; (S)-dihydroorotate from bicarbonate: step 2/3. In terms of biological role, catalyzes the condensation of carbamoyl phosphate and aspartate to form carbamoyl aspartate and inorganic phosphate, the committed step in the de novo pyrimidine nucleotide biosynthesis pathway. The sequence is that of Aspartate carbamoyltransferase catalytic subunit from Nitratidesulfovibrio vulgaris (strain ATCC 29579 / DSM 644 / CCUG 34227 / NCIMB 8303 / VKM B-1760 / Hildenborough) (Desulfovibrio vulgaris).